The following is a 208-amino-acid chain: Small ribosomal subunit protein uS4A (208 aa).

One can recognise an S4 RNA-binding domain in the interval 98-161 (LRLDNVVFRM…RKVLRISEAL (64 aa)).

It belongs to the universal ribosomal protein uS4 family. As to quaternary structure, part of the 30S ribosomal subunit. Contacts protein S5. The interaction surface between S4 and S5 is involved in control of translational fidelity.

In terms of biological role, one of the primary rRNA binding proteins, it binds directly to 16S rRNA where it nucleates assembly of the body of the 30S subunit. Its function is as follows. With S5 and S12 plays an important role in translational accuracy. The protein is Small ribosomal subunit protein uS4A of Myxococcus xanthus (strain DK1622).